A 131-amino-acid polypeptide reads, in one-letter code: Profilin-5 (131 aa).

A disulfide bridge links cysteine 13 with cysteine 115. Positions 81 to 97 match the Involved in PIP2 interaction motif; that stretch reads AVIRGKKGAGGITIKKT. A Phosphothreonine modification is found at threonine 111.

Belongs to the profilin family. Occurs in many kinds of cells as a complex with monomeric actin in a 1:1 ratio. Post-translationally, phosphorylated by MAP kinases.

Its subcellular location is the cytoplasm. It localises to the cytoskeleton. Binds to actin and affects the structure of the cytoskeleton. At high concentrations, profilin prevents the polymerization of actin, whereas it enhances it at low concentrations. The sequence is that of Profilin-5 from Phleum pratense (Common timothy).